Consider the following 201-residue polypeptide: Recombination protein RecR (201 aa).

Residues 56-71 (CKICFNVSSDEVCQYC) form a C4-type zinc finger. A Toprim domain is found at 79–174 (SMICVVEESK…TVSRLASGLP (96 aa)).

The protein belongs to the RecR family.

Functionally, may play a role in DNA repair. It seems to be involved in an RecBC-independent recombinational process of DNA repair. It may act with RecF and RecO. The chain is Recombination protein RecR from Cutibacterium acnes (strain DSM 16379 / KPA171202) (Propionibacterium acnes).